The primary structure comprises 75 residues: Parvalbumin beta 3 (75 aa).

The residue at position 1 (Ala-1) is an N-acetylalanine. Residues 26–61 (YKAFFAKKAFFVIDQDKSGFIEEDELKLFLQVFSAG) form the EF-hand domain. 6 residues coordinate Ca(2+): Asp-39, Asp-41, Ser-43, Phe-45, Glu-47, and Glu-50.

The protein belongs to the parvalbumin family.

In terms of biological role, in muscle, parvalbumin is thought to be involved in relaxation after contraction. It binds two calcium ions. This Merluccius gayi (South Pacific hake) protein is Parvalbumin beta 3.